The primary structure comprises 599 residues: Replication protein E1 (599 aa).

The short motif at 78–80 (KRK) is the Nuclear localization signal element. A phosphoserine; by host mark is found at Ser84 and Ser93. A Nuclear export signal motif is present at residues 92 to 101 (LSPQLQAVKI). Over residues 124-140 (NSLTQVESESQAGPSSQ) the composition is skewed to polar residues. The disordered stretch occupies residues 124-144 (NSLTQVESESQAGPSSQDGGG). The DNA-binding region stretch occupies residues 139–303 (SQDGGGDINL…LVSHQAATTA (165 aa)). Positions 402-552 (VNILSFLIVL…MPILDDGSPM (151 aa)) constitute an SF3 helicase domain. ATP is bound at residue 428-435 (GPPDTGKS). Residue Lys509 forms a Glycyl lysine isopeptide (Lys-Gly) (interchain with G-Cter in SUMO) linkage. Residues 575-599 (DPEEENNGVPSRTFRCTSRSNSDSY) are disordered. Residues 582 to 599 (GVPSRTFRCTSRSNSDSY) show a composition bias toward polar residues.

The protein belongs to the papillomaviridae E1 protein family. In terms of assembly, can form hexamers. Interacts with E2 protein; this interaction increases E1 DNA binding specificity. Interacts with host DNA polymerase subunit POLA2. Interacts with host single stranded DNA-binding protein RPA1. Interacts with host TOP1; this interaction stimulates the enzymatic activity of TOP1. In terms of processing, phosphorylated. Post-translationally, sumoylated.

Its subcellular location is the host nucleus. It carries out the reaction Couples ATP hydrolysis with the unwinding of duplex DNA by translocating in the 3'-5' direction.. The catalysed reaction is ATP + H2O = ADP + phosphate + H(+). Its function is as follows. ATP-dependent DNA 3'-5' helicase required for initiation of viral DNA replication. It forms a complex with the viral E2 protein. The E1-E2 complex binds to the replication origin which contains binding sites for both proteins. During the initial step, a dimer of E1 interacts with a dimer of protein E2 leading to a complex that binds the viral origin of replication with high specificity. Then, a second dimer of E1 displaces the E2 dimer in an ATP-dependent manner to form the E1 tetramer. Following this, two E1 monomers are added to each half of the site, which results in the formation of two E1 trimers on the viral ori. Subsequently, two hexamers will be created. The double hexamer acts as a bi-directional helicase machinery and unwinds the viral DNA and then recruits the host DNA polymerase to start replication. In Homo sapiens (Human), this protein is Replication protein E1.